The chain runs to 430 residues: Delta-aminolevulinic acid dehydratase 1, chloroplastic (430 aa).

Residues 1–52 (MATTPIFNASCSFPSTRGIDCKSYIGLRSNVSKVSVASSRIATSQRRNLVVR) constitute a chloroplast transit peptide. The segment covering 82–91 (EAPPVPPKPA) has biased composition (pro residues). Residues 82–101 (EAPPVPPKPAAPVGTPIIKP) form a disordered region. The active-site Schiff-base intermediate with substrate is lysine 298. 5-aminolevulinate-binding residues include arginine 308 and lysine 320. Residue glutamate 336 participates in Mg(2+) binding. The active-site Schiff-base intermediate with substrate is lysine 351. 5-aminolevulinate is bound by residues serine 377 and tyrosine 416.

It belongs to the ALAD family. In terms of assembly, homooctamer. Mg(2+) is required as a cofactor. In terms of tissue distribution, highly expressed in cotyledons during dark-to-light transition.

Its subcellular location is the plastid. The protein resides in the chloroplast. The catalysed reaction is 2 5-aminolevulinate = porphobilinogen + 2 H2O + H(+). The protein operates within porphyrin-containing compound metabolism; protoporphyrin-IX biosynthesis; coproporphyrinogen-III from 5-aminolevulinate: step 1/4. It functions in the pathway porphyrin-containing compound metabolism; chlorophyll biosynthesis. Functionally, catalyzes an early step in the biosynthesis of tetrapyrroles. Binds two molecules of 5-aminolevulinate per subunit, each at a distinct site, and catalyzes their condensation to form porphobilinogen. The protein is Delta-aminolevulinic acid dehydratase 1, chloroplastic (HEMB1) of Arabidopsis thaliana (Mouse-ear cress).